The sequence spans 204 residues: Ribosomal RNA small subunit methyltransferase G (204 aa).

Residues G74, L79, 125–126 (AY), and R138 contribute to the S-adenosyl-L-methionine site.

The protein belongs to the methyltransferase superfamily. RNA methyltransferase RsmG family.

It localises to the cytoplasm. Specifically methylates the N7 position of a guanine in 16S rRNA. The sequence is that of Ribosomal RNA small subunit methyltransferase G from Brachyspira hyodysenteriae (strain ATCC 49526 / WA1).